The following is a 178-amino-acid chain: ATP synthase subunit delta (178 aa).

The protein belongs to the ATPase delta chain family. F-type ATPases have 2 components, F(1) - the catalytic core - and F(0) - the membrane proton channel. F(1) has five subunits: alpha(3), beta(3), gamma(1), delta(1), epsilon(1). F(0) has three main subunits: a(1), b(2) and c(10-14). The alpha and beta chains form an alternating ring which encloses part of the gamma chain. F(1) is attached to F(0) by a central stalk formed by the gamma and epsilon chains, while a peripheral stalk is formed by the delta and b chains.

The protein resides in the cell membrane. Functionally, f(1)F(0) ATP synthase produces ATP from ADP in the presence of a proton or sodium gradient. F-type ATPases consist of two structural domains, F(1) containing the extramembraneous catalytic core and F(0) containing the membrane proton channel, linked together by a central stalk and a peripheral stalk. During catalysis, ATP synthesis in the catalytic domain of F(1) is coupled via a rotary mechanism of the central stalk subunits to proton translocation. This protein is part of the stalk that links CF(0) to CF(1). It either transmits conformational changes from CF(0) to CF(1) or is implicated in proton conduction. This chain is ATP synthase subunit delta, found in Streptococcus sanguinis (strain SK36).